We begin with the raw amino-acid sequence, 209 residues long: Uracil phosphoribosyltransferase (209 aa).

5-phospho-alpha-D-ribose 1-diphosphate-binding positions include arginine 79, arginine 104, and 131 to 139 (DPMLATGNS). Residues isoleucine 194 and 199-201 (GDA) each bind uracil. 5-phospho-alpha-D-ribose 1-diphosphate is bound at residue aspartate 200.

It belongs to the UPRTase family. Mg(2+) serves as cofactor.

The enzyme catalyses UMP + diphosphate = 5-phospho-alpha-D-ribose 1-diphosphate + uracil. The protein operates within pyrimidine metabolism; UMP biosynthesis via salvage pathway; UMP from uracil: step 1/1. With respect to regulation, allosterically activated by GTP. In terms of biological role, catalyzes the conversion of uracil and 5-phospho-alpha-D-ribose 1-diphosphate (PRPP) to UMP and diphosphate. This chain is Uracil phosphoribosyltransferase, found in Sinorhizobium medicae (strain WSM419) (Ensifer medicae).